We begin with the raw amino-acid sequence, 1992 residues long: E3 ubiquitin-protein ligase TRIP12 (1992 aa).

The span at M1–G10 shows a compositional bias: polar residues. Residues M1–E398 form a disordered region. Residue S2 is modified to N-acetylserine. At S12 the chain carries Phosphoserine. A compositionally biased stretch (polar residues) spans R18–D27. Over residues S29–V43 the composition is skewed to low complexity. Over residues D48–R70 the composition is skewed to basic and acidic residues. Phosphoserine is present on residues S77, S85, and S100. Residues P78–S88 are compositionally biased toward polar residues. Residues S154–E164 show a composition bias toward polar residues. Composition is skewed to low complexity over residues P175 to A188 and S196 to A215. K181 carries the N6-acetyllysine modification. Polar residues predominate over residues P280 to P290. Phosphoserine is present on residues S310 and S312. The span at G330 to G339 shows a compositional bias: low complexity. Residues G346–D358 are compositionally biased toward basic and acidic residues. Residues N362–A371 are compositionally biased toward polar residues. The region spanning M749–K836 is the WWE domain. Positions S938–S1044 are disordered. S942 bears the Phosphoserine mark. The segment covering T948 to V960 has biased composition (polar residues). Residues N961–A973 show a composition bias toward low complexity. Phosphoserine is present on residues S991 and S997. Residues K1001 to K1014 are compositionally biased toward basic residues. S1016 carries the phosphoserine modification. Over residues P1017–N1026 the composition is skewed to basic and acidic residues. A compositionally biased stretch (low complexity) spans K1029–S1040. Residues S1030, S1317, S1322, S1329, and S1376 each carry the phosphoserine modification. T1377 is subject to Phosphothreonine. 2 disordered regions span residues S1407–H1434 and T1568–D1587. K1425 carries the post-translational modification N6-acetyllysine. Phosphoserine is present on S1427. Residues E1496–P1570 are K-box. Residues P1885 to S1992 enclose the HECT domain. Catalysis depends on C1959, which acts as the Glycyl thioester intermediate.

It belongs to the UPL family. K-HECT subfamily. Interacts with MYC; leading to disrupt interaction with isoform p19ARF/ARF of CDKN2A. Interacts with TRADD; leading to disrupt interaction with isoform p19ARF/ARF of CDKN2A. Interacts with SMARCC1; leading to disrupt interaction with SMARCE1.

Its subcellular location is the nucleus. It is found in the nucleoplasm. The catalysed reaction is S-ubiquitinyl-[E2 ubiquitin-conjugating enzyme]-L-cysteine + [acceptor protein]-L-lysine = [E2 ubiquitin-conjugating enzyme]-L-cysteine + N(6)-ubiquitinyl-[acceptor protein]-L-lysine.. The protein operates within protein modification; protein ubiquitination. E3 ubiquitin-protein ligase involved in ubiquitin fusion degradation (UFD) pathway and regulation of DNA repair. Part of the ubiquitin fusion degradation (UFD) pathway, a process that mediates ubiquitination of protein at their N-terminus, regardless of the presence of lysine residues in target proteins. Acts as a key regulator of DNA damage response by acting as a suppressor of RNF168, an E3 ubiquitin-protein ligase that promotes accumulation of 'Lys-63'-linked histone H2A and H2AX at DNA damage sites, thereby acting as a guard against excessive spreading of ubiquitinated chromatin at damaged chromosomes. In normal cells, mediates ubiquitination and degradation of isoform p19ARF/ARF of CDKN2A, a lysine-less tumor suppressor required for p53/TP53 activation under oncogenic stress. In cancer cells, however, isoform p19ARF/ARF and TRIP12 are located in different cell compartments, preventing isoform p19ARF/ARF ubiquitination and degradation. Does not mediate ubiquitination of isoform p16-INK4a of CDKN2A. Also catalyzes ubiquitination of NAE1 and SMARCE1, leading to their degradation. Ubiquitination and degradation of target proteins is regulated by interaction with proteins such as MYC, TRADD or SMARCC1, which disrupt the interaction between TRIP12 and target proteins. Mediates ubiquitination of ASXL1: following binding to N(6)-methyladenosine methylated DNA, ASXL1 is ubiquitinated by TRIP12, leading to its degradation and subsequent inactivation of the PR-DUB complex. The polypeptide is E3 ubiquitin-protein ligase TRIP12 (TRIP12) (Bos taurus (Bovine)).